Reading from the N-terminus, the 1099-residue chain is Mediator of RNA polymerase II transcription subunit 5 (1099 aa).

Residues 41–66 (DNDDAKTQEGSGSQDKTDVEESISKP) are disordered.

It belongs to the Mediator complex subunit 5 family. In terms of assembly, component of the Mediator complex.

The protein localises to the nucleus. Its function is as follows. Component of the Mediator complex, a coactivator involved in the regulated transcription of nearly all RNA polymerase II-dependent genes. Mediator functions as a bridge to convey information from gene-specific regulatory proteins to the basal RNA polymerase II transcription machinery. Mediator is recruited to promoters by direct interactions with regulatory proteins and serves as a scaffold for the assembly of a functional preinitiation complex with RNA polymerase II and the general transcription factors. The sequence is that of Mediator of RNA polymerase II transcription subunit 5 (NUT1) from Candida glabrata (strain ATCC 2001 / BCRC 20586 / JCM 3761 / NBRC 0622 / NRRL Y-65 / CBS 138) (Yeast).